Consider the following 430-residue polypeptide: MDSAITLWQFLLQLLQEPQNEHMICWTSNNGEFKLLQAEEVARLWGIRKNKPNMNYDKLSRALRYYYVKNIIKKVNGQKFVYKFVSYPEILKMDPLTVGRIEGDCEALNSIETSSSKDVEYGGKERPPQPGAKTSSRNDYIHSGLYSSFTLNSLNTSNKKLFKSIKIENPAEKLAEKKAQEPTPSVIKFVTTPAKKPPIEPVAAAFATSPSLSPSSEETIQALETLVSPTLPSLETPASISILATTFNPTPPVPSTPLPLKEPPRTPSPPLSSNPDIDTDIESVASQPMELPENLSLEPKNEDSALPEKDKTNNSSRSKKPKGLELTPALVVTGSDPSPLGILSPSLPTASLTPALFSQTPILLTPSPLLSSIHFWSTLSPFAPLSPARLQGANTLFQFPSVLNSHGPFTLSGLDGPSTPGPFSPDLQKT.

The ETS DNA-binding region spans 5–85 (ITLWQFLLQL…NGQKFVYKFV (81 aa)). The segment covering 116 to 127 (SKDVEYGGKERP) has biased composition (basic and acidic residues). The segment at 116-138 (SKDVEYGGKERPPQPGAKTSSRN) is disordered. Lys-166 is covalently cross-linked (Glycyl lysine isopeptide (Lys-Gly) (interchain with G-Cter in SUMO2)). 2 disordered regions span residues 245 to 279 (TTFN…DIDT) and 292 to 325 (PENL…KGLE). The span at 249–272 (PTPPVPSTPLPLKEPPRTPSPPLS) shows a compositional bias: pro residues. Over residues 299–312 (PKNEDSALPEKDKT) the composition is skewed to basic and acidic residues.

Belongs to the ETS family. As to quaternary structure, interacts with SIRT7. As to expression, lung and liver.

It localises to the nucleus. Involved in both transcriptional activation and repression. Interaction with SIRT7 leads to recruitment and stabilization of SIRT7 at promoters, followed by deacetylation of histone H3 at 'Lys-18' (H3K18Ac) and subsequent transcription repression. Forms a ternary complex with the serum response factor (SRF). Requires DNA-bound SRF for ternary complex formation and makes extensive DNA contacts to the 5'side of SRF, but does not bind DNA autonomously. This chain is ETS domain-containing protein Elk-4 (Elk4), found in Mus musculus (Mouse).